Reading from the N-terminus, the 259-residue chain is Phosphate import ATP-binding protein PstB 1 (259 aa).

An ABC transporter domain is found at 13–254 (IETKDVDLFY…PAEKETEDYI (242 aa)). ATP is bound at residue 45–52 (GPSGCGKS).

The protein belongs to the ABC transporter superfamily. Phosphate importer (TC 3.A.1.7) family. The complex is composed of two ATP-binding proteins (PstB), two transmembrane proteins (PstC and PstA) and a solute-binding protein (PstS).

It is found in the cell membrane. It carries out the reaction phosphate(out) + ATP + H2O = ADP + 2 phosphate(in) + H(+). In terms of biological role, part of the ABC transporter complex PstSACB involved in phosphate import. Responsible for energy coupling to the transport system. The chain is Phosphate import ATP-binding protein PstB 1 from Listeria innocua serovar 6a (strain ATCC BAA-680 / CLIP 11262).